Consider the following 426-residue polypeptide: Serine hydroxymethyltransferase (426 aa).

(6S)-5,6,7,8-tetrahydrofolate-binding positions include leucine 113 and 117–119 (GHL). Residue lysine 222 is modified to N6-(pyridoxal phosphate)lysine. (6S)-5,6,7,8-tetrahydrofolate is bound at residue 363–365 (SAF).

Belongs to the SHMT family. As to quaternary structure, homodimer. The cofactor is pyridoxal 5'-phosphate.

It localises to the cytoplasm. The catalysed reaction is (6R)-5,10-methylene-5,6,7,8-tetrahydrofolate + glycine + H2O = (6S)-5,6,7,8-tetrahydrofolate + L-serine. It functions in the pathway one-carbon metabolism; tetrahydrofolate interconversion. Its pathway is amino-acid biosynthesis; glycine biosynthesis; glycine from L-serine: step 1/1. Functionally, catalyzes the reversible interconversion of serine and glycine with tetrahydrofolate (THF) serving as the one-carbon carrier. This reaction serves as the major source of one-carbon groups required for the biosynthesis of purines, thymidylate, methionine, and other important biomolecules. Also exhibits THF-independent aldolase activity toward beta-hydroxyamino acids, producing glycine and aldehydes, via a retro-aldol mechanism. This chain is Serine hydroxymethyltransferase, found in Bacteroides thetaiotaomicron (strain ATCC 29148 / DSM 2079 / JCM 5827 / CCUG 10774 / NCTC 10582 / VPI-5482 / E50).